Here is a 371-residue protein sequence, read N- to C-terminus: MTKSVGIIGWRGMVGSVLLKRMQEENDFSKIIPYFFSTSQSGQDGPIINNILSKNLKDAYNINLLQEMDIIITCQGSSYTEKIYPKLRNNNWQGYWIDAASTLRMEKDATIILDPVNLNVINNALDKGIKTFVGGNCTVSLMLMALGGLFVNNLIDWVFVSTYQAASGAGSRYVIELLKQMGSLYNVVSKDLLDKSYSVLDIEKKVTQESRSKNFPLENFSVPLATSLIPWIDVEMKNGQSREEWKGQAETNKILNLKKKVLIDGTCVRISSIRCHSQSFLIKLNKDISLENIKKIIVNHNQWVDVIPNNMQKTLCNLTPSAVTDTLNIPIGRLRKLNIDDRYLSAFTVGDQLLWGAAEPLRRMLNLLVNI.

NADP(+)-binding positions include Arg-11–Val-14, Thr-38–Ser-39, and Gln-75. Arg-104 contributes to the phosphate binding site. Cys-137 acts as the Acyl-thioester intermediate in catalysis. Gln-164 is a binding site for substrate. Ser-167–Gly-168 is a binding site for NADP(+). Glu-243 contacts substrate. Lys-246 is a phosphate binding site. Arg-269 contacts substrate. Residue His-276 is the Proton acceptor of the active site. Gln-352 contributes to the NADP(+) binding site.

It belongs to the aspartate-semialdehyde dehydrogenase family. As to quaternary structure, homodimer.

It carries out the reaction L-aspartate 4-semialdehyde + phosphate + NADP(+) = 4-phospho-L-aspartate + NADPH + H(+). It functions in the pathway amino-acid biosynthesis; L-lysine biosynthesis via DAP pathway; (S)-tetrahydrodipicolinate from L-aspartate: step 2/4. Its pathway is amino-acid biosynthesis; L-methionine biosynthesis via de novo pathway; L-homoserine from L-aspartate: step 2/3. The protein operates within amino-acid biosynthesis; L-threonine biosynthesis; L-threonine from L-aspartate: step 2/5. Functionally, catalyzes the NADPH-dependent formation of L-aspartate-semialdehyde (L-ASA) by the reductive dephosphorylation of L-aspartyl-4-phosphate. The protein is Aspartate-semialdehyde dehydrogenase of Buchnera aphidicola subsp. Schizaphis graminum (strain Sg).